The chain runs to 332 residues: Holliday junction branch migration complex subunit RuvB (332 aa).

The interval 1-182 (MNKNFIESNL…FAFTCRLEYY (182 aa)) is large ATPase domain (RuvB-L). ATP is bound by residues leucine 21, arginine 22, glycine 63, lysine 66, threonine 67, threonine 68, 129–131 (EDF), arginine 172, tyrosine 182, and arginine 219. Residue threonine 67 participates in Mg(2+) binding. Residues 183-253 (DPMILQKILL…VANRALTMLS (71 aa)) are small ATPAse domain (RuvB-S). Residues 256-332 (EKGLDEMDKK…YQHIVGSSQR (77 aa)) form a head domain (RuvB-H) region. DNA-binding residues include arginine 311 and arginine 316.

The protein belongs to the RuvB family. In terms of assembly, homohexamer. Forms an RuvA(8)-RuvB(12)-Holliday junction (HJ) complex. HJ DNA is sandwiched between 2 RuvA tetramers; dsDNA enters through RuvA and exits via RuvB. An RuvB hexamer assembles on each DNA strand where it exits the tetramer. Each RuvB hexamer is contacted by two RuvA subunits (via domain III) on 2 adjacent RuvB subunits; this complex drives branch migration. In the full resolvosome a probable DNA-RuvA(4)-RuvB(12)-RuvC(2) complex forms which resolves the HJ.

The protein localises to the cytoplasm. It catalyses the reaction ATP + H2O = ADP + phosphate + H(+). Its function is as follows. The RuvA-RuvB-RuvC complex processes Holliday junction (HJ) DNA during genetic recombination and DNA repair, while the RuvA-RuvB complex plays an important role in the rescue of blocked DNA replication forks via replication fork reversal (RFR). RuvA specifically binds to HJ cruciform DNA, conferring on it an open structure. The RuvB hexamer acts as an ATP-dependent pump, pulling dsDNA into and through the RuvAB complex. RuvB forms 2 homohexamers on either side of HJ DNA bound by 1 or 2 RuvA tetramers; 4 subunits per hexamer contact DNA at a time. Coordinated motions by a converter formed by DNA-disengaged RuvB subunits stimulates ATP hydrolysis and nucleotide exchange. Immobilization of the converter enables RuvB to convert the ATP-contained energy into a lever motion, pulling 2 nucleotides of DNA out of the RuvA tetramer per ATP hydrolyzed, thus driving DNA branch migration. The RuvB motors rotate together with the DNA substrate, which together with the progressing nucleotide cycle form the mechanistic basis for DNA recombination by continuous HJ branch migration. Branch migration allows RuvC to scan DNA until it finds its consensus sequence, where it cleaves and resolves cruciform DNA. This is Holliday junction branch migration complex subunit RuvB from Protochlamydia amoebophila (strain UWE25).